The primary structure comprises 501 residues: MIRSVRRVFIYVSIFVLIIVLKRTLSGTDQTSMKQPVVVIGSGLAGLTTSNRLISKYRIPVVLLDKAASIGGNSIKASSGINGAHTDTQQNLKVMDTPELFLKDTLHSAKGRGVPSLMDKLTKESKSAIRWLQTEFDLKLDLLAQLGGHSVPRTHRSSGKLPPGFEIVQALSKKLKDISSKDSNLVQIMLNSEVVDIELDNQGHVTGVVYMDENGNRKIMKSHHVVFCSGGFGYSKEMLKEYSPNLIHLPTTNGKQTTGDGQKILSKLGAELIDMDQVQVHPTGFIDPNDRENNWKFLAAEALRGLGGILLHPTTGRRFTNELSTRDTVTMEIQSKCPKNDNRALLVMSDKVYENYTNNINFYMSKNLIKKVSINDLIRQYDLQTTASELVTELKSYSDVNTKDTFDRPLIINAFDKDISTESTVYVGEVTPVVHFTMGGVKINEKSQVIKKNSESVLSNGIFAAGEVSGGVHGANRLGGSSLLECVVFGKTAADNIAKLY.

Residues 1–32 (MIRSVRRVFIYVSIFVLIIVLKRTLSGTDQTS) constitute a mitochondrion transit peptide. 37–51 (VVVIGSGLAGLTTSN) contributes to the FAD binding site. Active-site residues include His281 and Arg304.

This sequence belongs to the FAD-dependent oxidoreductase 2 family. FRD/SDH subfamily. Requires FAD as cofactor.

The protein resides in the mitochondrion. It carries out the reaction succinate + NAD(+) = fumarate + NADH + H(+). Its function is as follows. Irreversibly catalyzes the reduction of fumarate to succinate. Together with the second isozyme of soluble fumarate reductase (FRD1), essential for anaerobic growth. Involved in maintaining redox balance during oxygen deficiency conditions. Reduction of fumarate is the main source of succinate during fermentation, and under anaerobic conditions, the formation of succinate is strictly required for the reoxidation of FADH(2). This Saccharomyces cerevisiae (strain ATCC 204508 / S288c) (Baker's yeast) protein is Fumarate reductase 2 (OSM1).